The chain runs to 671 residues: MNKYLVPPPQANRTVTNLDLLINNLRGSSTPGAAEVDTRDILQRIVFILPTIKNPLNLDLVIKEIINSPRLLPPLIDLHDYQQLTDAFRATIKRKALVTDPTISFEAWLETCFQVITRFAGPGWKKLPLLAGLILADYDISADGPTLERKPGFPSKLKHLLKREFVTTFDQCLSIDTRNRSDATKWVPVLACISIAQVYSLLGDVAINYRRFLQVGLDLIFSNYGLEMGTALARLHAESGGDATTAGGLIGKKLKEPVVALLNTFAHIASSCIVHVDIDYIDRIQNKIILVCENQAETWRILTIESPTVMHHQESVQYLKWELFTLCIIMQGIANMLLTQKMNQFMYLQLAYKQLQALHSIYFIVDQMGSQFAAYDYVFFSAIDVLLSEYAPYIKNRGTIPPNKEFVAERLAANLAGTSNVGSHLPIDRSRVLFALNYYEQLVTVCHDSCVETIIYPMARSFLYPTSDIQQLKPLVEAAHSVILAGLAVPTNAVVNAKLIPEYMGGVLPLFPGVFSWNQFVLAIQSIVNTVSPPSEVFKTNQKLFRLVLDSLMKKCRDTPVGIPVPHSVTVSQEQEDIPPTQRAVVMLALINSLPYVDIRSFELWLQETWNMIEATPMLAENAPNKELAHAEHEFLVLEMWKMISGNIDQRLNDVAIRWWYKKNARVHGTL.

8 helical membrane-spanning segments follow: residues 127-147, 187-207, 212-232, 258-278, 318-338, 372-392, 475-495, and 504-524; these read LPLL…GPTL, VPVL…DVAI, FLQV…GTAL, VVAL…HVDI, YLKW…NMLL, FAAY…EYAP, LVEA…NAVV, and MGGV…VLAI.

Its subcellular location is the peroxisome membrane. Involved in peroxisome biosynthesis. Required for the import of a subset of matrix proteins into peroxisomes. This chain is Peroxisomal membrane protein PEX17 (PEX17), found in Yarrowia lipolytica (strain CLIB 122 / E 150) (Yeast).